Consider the following 210-residue polypeptide: Glutathione S-transferase P (210 aa).

Residues 2–81 (PPYTVVYFPV…HLGRTLGLYG (80 aa)) enclose the GST N-terminal domain. Residue Y4 is modified to Phosphotyrosine; by EGFR. Residues Y8, R14, W39, K45, and 52-53 (QL) each bind glutathione. T62 bears the Phosphothreonine mark. A glutathione-binding site is contributed by 65–66 (QS). Positions 83 to 204 (DQREAALVDM…ASPEHVNLPI (122 aa)) constitute a GST C-terminal domain. N6-succinyllysine occurs at positions 103 and 116. At K128 the chain carries N6-acetyllysine.

This sequence belongs to the GST superfamily. Pi family. As to quaternary structure, homodimer. Interacts with CDK5.

The protein resides in the cytoplasm. The protein localises to the mitochondrion. It is found in the nucleus. It carries out the reaction RX + glutathione = an S-substituted glutathione + a halide anion + H(+). The catalysed reaction is prostaglandin J2 + glutathione = prostaglandin J2-S-(R)-glutathione. The enzyme catalyses prostaglandin J2 + glutathione = prostaglandin J2-S-(S)-glutathione. It catalyses the reaction prostaglandin A2 + glutathione = prostaglandin A2-S-(S)-glutathione. It carries out the reaction 11(S)-hydroxy-14(S),15(S)-epoxy-(5Z,8Z,12E)-eicosatrienoate + glutathione = (11S,15S)-dihydroxy-14(R)-S-glutathionyl-(5Z,8Z,12E)-eicosatrienoate. Conjugation of reduced glutathione to a wide number of exogenous and endogenous hydrophobic electrophiles. Involved in the formation of glutathione conjugates of both prostaglandin A2 (PGA2) and prostaglandin J2 (PGJ2). Participates in the formation of novel hepoxilin regioisomers. Negatively regulates CDK5 activity via p25/p35 translocation to prevent neurodegeneration. This is Glutathione S-transferase P (GSTP1) from Macaca mulatta (Rhesus macaque).